Reading from the N-terminus, the 497-residue chain is Putative BTB/POZ domain-containing protein R738 (497 aa).

One can recognise a BTB domain in the interval serine 16 to alanine 86.

The protein belongs to the mimivirus BTB/WD family.

The chain is Putative BTB/POZ domain-containing protein R738 from Acanthamoeba polyphaga (Amoeba).